A 335-amino-acid chain; its full sequence is 3-ketodihydrosphingosine reductase TSC10 (335 aa).

Positions 42, 44, 45, and 46 each coordinate NADPH. The GXSXG signature appears at 42 to 46 (GGSSG). Leu47 is a binding site for NADP(+). NADPH is bound by residues Arg67, Asp68, Lys71, Asp95, and Leu96. Asp95 contributes to the NADP(+) binding site. NADP(+) is bound by residues Tyr190, Lys194, and Ile223. Tyr190 serves as the catalytic Proton acceptor. Lys194 serves as the catalytic Lowers pKa of active site Tyr. The chain crosses the membrane as a helical span at residues 288–308 (TNNFLLDTLWLIVSSVGVPIW).

Belongs to the short-chain dehydrogenases/reductases (SDR) family.

The protein localises to the endoplasmic reticulum membrane. The enzyme catalyses sphinganine + NADP(+) = 3-oxosphinganine + NADPH + H(+). It functions in the pathway lipid metabolism; sphingolipid metabolism. Its function is as follows. Catalyzes the reduction of 3'-oxosphinganine (3-ketodihydrosphingosine/KDS) to sphinganine (dihydrosphingosine/DHS), the second step of de novo sphingolipid biosynthesis. The polypeptide is 3-ketodihydrosphingosine reductase TSC10 (TSC10) (Cryptococcus neoformans var. neoformans serotype D (strain B-3501A) (Filobasidiella neoformans)).